The sequence spans 40 residues: Large ribosomal subunit protein bL36B (40 aa).

This sequence belongs to the bacterial ribosomal protein bL36 family.

This is Large ribosomal subunit protein bL36B from Leifsonia xyli subsp. xyli (strain CTCB07).